Reading from the N-terminus, the 153-residue chain is uncharacterized protein (153 aa).

Residues 1 to 22 (MKLLKKGTTVLFVMIMAVMLVA) form the signal peptide. Residue cysteine 23 is the site of N-palmitoyl cysteine attachment. Cysteine 23 carries the S-diacylglycerol cysteine lipid modification. The segment at 121-153 (LPGMASTGDVSKGISMKESEKMLKSQGFKEVEK) is disordered. Basic and acidic residues predominate over residues 135-153 (SMKESEKMLKSQGFKEVEK).

The protein to E.coli YehR.

It is found in the cell membrane. This is an uncharacterized protein from Listeria innocua serovar 6a (strain ATCC BAA-680 / CLIP 11262).